A 404-amino-acid chain; its full sequence is MTMAMASMKGENVTVSAAAAPRMKKLASMLCMKGGNGDGSYLNNSQAQALHARRMLHFLEETLDAMMERSSSDKLFTAADLGCSCGSNSLFIVDVIVRRVSEAYESRGRDAPEFQVFFSDLPSNDFNTLFQLLPPLLAPVAGSLEECLAAGEGAATATRPYHAAGVPGTFYGRLFPGESIDVFTSTFSLHWLSQVPEEVGDSASPAYNGGRVFVHRATEAVAAAYKRQFQADLARFLRSRAREMKRGGAMFLACLGRSSGDPADQGGAGLLFGTHFQDAWDDLVQEGVVEGEKRDSFNIPVYAPSLQEFRDVVRADGAFAIDRLELVRGGSPLVVDRPDDAAEVGRAMANSCKAVAGVLVDAHIGERRGAQLFERLERRAARHARELVEKMHFFHVVCSLSLAP.

S-adenosyl-L-methionine-binding positions include 82–83, asparagine 88, aspartate 120, 169–171, and 186–188; these read GC, TFY, and TFS. Mg(2+) is bound by residues asparagine 208, valine 212, arginine 294, aspartate 295, phenylalanine 297, and asparagine 298.

This sequence belongs to the methyltransferase superfamily. SABATH family. In terms of assembly, homodimer. Mg(2+) is required as a cofactor. As to expression, expressed in roots and panicles.

It carries out the reaction (indol-3-yl)acetate + S-adenosyl-L-methionine = methyl (indol-3-yl)acetate + S-adenosyl-L-homocysteine. Functionally, catalyzes the methylation of the free carboxyl end of the plant hormone indole-3-acetic acid (IAA). Converts IAA to IAA methyl ester (MeIAA). Regulates IAA activities by IAA methylation. Methylation of IAA plays an important role in regulating plant development and auxin homeostasis. MeIAA seems to be an inactive form of IAA. The polypeptide is Indole-3-acetate O-methyltransferase 1 (IAMT1) (Oryza sativa subsp. japonica (Rice)).